Here is a 225-residue protein sequence, read N- to C-terminus: NAD(P)H-quinone oxidoreductase subunit K, chloroplastic (225 aa).

Residues Cys-43, Cys-44, Cys-108, and Cys-139 each contribute to the [4Fe-4S] cluster site.

It belongs to the complex I 20 kDa subunit family. As to quaternary structure, NDH is composed of at least 16 different subunits, 5 of which are encoded in the nucleus. Requires [4Fe-4S] cluster as cofactor.

Its subcellular location is the plastid. The protein resides in the chloroplast thylakoid membrane. The catalysed reaction is a plastoquinone + NADH + (n+1) H(+)(in) = a plastoquinol + NAD(+) + n H(+)(out). It carries out the reaction a plastoquinone + NADPH + (n+1) H(+)(in) = a plastoquinol + NADP(+) + n H(+)(out). In terms of biological role, NDH shuttles electrons from NAD(P)H:plastoquinone, via FMN and iron-sulfur (Fe-S) centers, to quinones in the photosynthetic chain and possibly in a chloroplast respiratory chain. The immediate electron acceptor for the enzyme in this species is believed to be plastoquinone. Couples the redox reaction to proton translocation, and thus conserves the redox energy in a proton gradient. This Fagopyrum esculentum subsp. ancestrale (Wild buckwheat) protein is NAD(P)H-quinone oxidoreductase subunit K, chloroplastic.